A 484-amino-acid polypeptide reads, in one-letter code: Monocarboxylate transporter 2 (484 aa).

Over 1 to 16 (MPSETAVPPPHPIPPD) the chain is Cytoplasmic. Residues 17–37 (GGWGWVVVGAAFISIGFSYAF) traverse the membrane as a helical segment. The Extracellular portion of the chain corresponds to 38-60 (PKAVTVFFKDIQQIFQASYSEIA). A helical membrane pass occupies residues 61 to 81 (WISSIMLAVMYAGGPISSVLV). Residues 82–87 (NNYGSR) lie on the Cytoplasmic side of the membrane. The chain crosses the membrane as a helical span at residues 88 to 108 (PVVIIGGLLCCTGMILASFSN). Topologically, residues 109-116 (SVLELYLT) are extracellular. A helical transmembrane segment spans residues 117–137 (IGFIGGLGLAFNLQPALTIIG). The Cytoplasmic segment spans residues 138–144 (KYFYRRR). Residues 145-165 (PMANGLAMAGSPVFLSSLAPF) traverse the membrane as a helical segment. The Extracellular segment spans residues 166–174 (NQYLFNSYG). The helical transmembrane segment at 175–195 (WKGSFLILGGIFLHSCVAGCL) threads the bilayer. Residues 196–245 (MRPVQTSPRKSKSKSKVGSRQDGSMKKASKVSTAEKINRFLDFSLFKHRG) lie on the Cytoplasmic side of the membrane. Positions 201–224 (TSPRKSKSKSKVGSRQDGSMKKAS) are disordered. A helical transmembrane segment spans residues 246–266 (FLIYLSGNVIMFLGFFAPIIF). The Extracellular segment spans residues 267–282 (LAPYAKDKGVDEYNAA). A helical transmembrane segment spans residues 283–303 (LLLSVMAFVDMFARPTGGLIA). The Cytoplasmic segment spans residues 304–311 (NSKLIRPR). A helical transmembrane segment spans residues 312 to 332 (IQYFFSFAIVFTGICHLLCPL). Topologically, residues 333-337 (ADTYP) are extracellular. A helical membrane pass occupies residues 338-358 (ALVVYSIFFGYGFGSVSSVLF). At 359–372 (ETLMDLVGPARFSS) the chain is on the cytoplasmic side. Residues 373-393 (AVGLATIVECCPVLLGPPLAG) form a helical membrane-spanning segment. At 394–405 (KLVDKTKDYKYM) the chain is on the extracellular side. The chain crosses the membrane as a helical span at residues 406–426 (YIASGTIVVISGIYLFIGNAI). Over 427–484 (NYRLLAKERKREKARKKKSATHPSRESEALSRSKQDDVSVKVSNPHNSPSDRERESNI) the chain is Cytoplasmic. A disordered region spans residues 437-484 (REKARKKKSATHPSRESEALSRSKQDDVSVKVSNPHNSPSDRERESNI). Basic and acidic residues-rich tracts occupy residues 449–465 (PSRE…DDVS) and 475–484 (PSDRERESNI).

This sequence belongs to the major facilitator superfamily. Monocarboxylate porter (TC 2.A.1.13) family. As to quaternary structure, homodimer. Interacts with GRID2IP. Interacts with EMB; interaction mediates SLC16A7 targeting to the plasma membrane. Interacts with isoform 2 of BSG. As to expression, abundant on the surface of hepatocytes. Present on parietal cells of the oxyntic gland of the stomach, on the basolateral surface of epithelial cells in the collecting ducts of the kidney, on sperm tails throughout the epididymis. Expressed in mitochondria-rich skeletal muscle fibers and cardiac myocytes (at protein level).

The protein resides in the cell membrane. It localises to the basolateral cell membrane. The protein localises to the cytoplasm. The catalysed reaction is pyruvate(out) + H(+)(out) = pyruvate(in) + H(+)(in). The enzyme catalyses 3-methyl-2-oxobutanoate(out) + H(+)(out) = 3-methyl-2-oxobutanoate(in) + H(+)(in). It carries out the reaction (S)-lactate(in) + H(+)(in) = (S)-lactate(out) + H(+)(out). It catalyses the reaction acetoacetate(out) + H(+)(out) = acetoacetate(in) + H(+)(in). The catalysed reaction is (R)-3-hydroxybutanoate(out) + H(+)(out) = (R)-3-hydroxybutanoate(in) + H(+)(in). The enzyme catalyses 4-methyl-2-oxopentanoate(out) + H(+)(out) = 4-methyl-2-oxopentanoate(in) + H(+)(in). It carries out the reaction (S)-3-hydroxybutanoate(out) + H(+)(out) = (S)-3-hydroxybutanoate(in) + H(+)(in). With respect to regulation, transport activity exhibits steep dependence on substrate concentration. Substrate concentration sensitivity of SLC16A7 arises from the strong inter-subunit cooperativity of the SLC16A7 dimer during transport. Inhibited by AR-C155858. Functionally, proton-coupled monocarboxylate symporter. Catalyzes the rapid transport across the plasma membrane of monocarboxylates such as L-lactate, pyruvate and ketone bodies, acetoacetate, beta-hydroxybutyrate and acetate. Dimerization is functionally required and both subunits work cooperatively in transporting substrate. The chain is Monocarboxylate transporter 2 (SLC16A7) from Mesocricetus auratus (Golden hamster).